Reading from the N-terminus, the 222-residue chain is Octanoyltransferase (222 aa).

The 181-residue stretch at G34–V214 folds into the BPL/LPL catalytic domain. Substrate contacts are provided by residues R72–H79, A144–G146, and G157–A159. The active-site Acyl-thioester intermediate is C175.

This sequence belongs to the LipB family.

It is found in the cytoplasm. It catalyses the reaction octanoyl-[ACP] + L-lysyl-[protein] = N(6)-octanoyl-L-lysyl-[protein] + holo-[ACP] + H(+). It functions in the pathway protein modification; protein lipoylation via endogenous pathway; protein N(6)-(lipoyl)lysine from octanoyl-[acyl-carrier-protein]: step 1/2. Its function is as follows. Catalyzes the transfer of endogenously produced octanoic acid from octanoyl-acyl-carrier-protein onto the lipoyl domains of lipoate-dependent enzymes. Lipoyl-ACP can also act as a substrate although octanoyl-ACP is likely to be the physiological substrate. The chain is Octanoyltransferase from Paenarthrobacter aurescens (strain TC1).